Here is a 95-residue protein sequence, read N- to C-terminus: N(2)-fixation sustaining protein CowN (95 aa).

The protein belongs to the CowN family.

Is required to sustain N(2)-dependent growth in the presence of low levels of carbon monoxide (CO). Probably acts by protecting the N(2) fixation ability of the nitrogenase complex, which is inactivated in the presence of CO. The sequence is that of N(2)-fixation sustaining protein CowN from Allochromatium vinosum (strain ATCC 17899 / DSM 180 / NBRC 103801 / NCIMB 10441 / D) (Chromatium vinosum).